The chain runs to 394 residues: NAD(P)H-quinone oxidoreductase subunit H (394 aa).

The protein belongs to the complex I 49 kDa subunit family. NDH-1 can be composed of about 15 different subunits; different subcomplexes with different compositions have been identified which probably have different functions.

It localises to the cellular thylakoid membrane. The enzyme catalyses a plastoquinone + NADH + (n+1) H(+)(in) = a plastoquinol + NAD(+) + n H(+)(out). It catalyses the reaction a plastoquinone + NADPH + (n+1) H(+)(in) = a plastoquinol + NADP(+) + n H(+)(out). Functionally, NDH-1 shuttles electrons from an unknown electron donor, via FMN and iron-sulfur (Fe-S) centers, to quinones in the respiratory and/or the photosynthetic chain. The immediate electron acceptor for the enzyme in this species is believed to be plastoquinone. Couples the redox reaction to proton translocation, and thus conserves the redox energy in a proton gradient. Cyanobacterial NDH-1 also plays a role in inorganic carbon-concentration. The chain is NAD(P)H-quinone oxidoreductase subunit H from Prochlorococcus marinus (strain MIT 9211).